Reading from the N-terminus, the 1347-residue chain is Serine-aspartate repeat-containing protein D (1347 aa).

The N-terminal stretch at 1–35 is a signal peptide; that stretch reads MLNRENKTAITRKGMVSNRLNKFSIRKYTVGTASI. Residues 23–34 carry the YSIRK-G/S signaling motif motif; it reads FSIRKYTVGTAS. A ligand binding A region region spans residues 36–568; that stretch reads LVGTTLIFGL…NNQSGGAGQE (533 aa). The interval 55–185 is disordered; sequence STNKELNEAT…NKKVDAKTES (131 aa). 2 stretches are compositionally biased toward polar residues: residues 62 to 71 and 94 to 109; these read EATTSASDNQ and EMVS…NGNK. Positions 130–145 are enriched in basic and acidic residues; sequence KSDEQASPKSTNEDLN. Composition is skewed to polar residues over residues 146–155 and 163–173; these read TKQTISNQEA and NKSVVNAQPTN. Basic and acidic residues predominate over residues 174–183; sequence EENKKVDAKT. CNA-B domains are found at residues 569-680, 681-791, 792-901, 902-1012, and 1013-1123; these read VYKI…IYKP, KYNL…YKTP, KYNL…FYKP, TYNL…YKTS, and KYSL…EEDT. Disordered stretches follow at residues 857–883, 972–992, and 1078–1323; these read ETPS…TSTT, YTPT…GLTT, and EKPA…SNNA. Polar residues-rich tracts occupy residues 860 to 869 and 972 to 981; these read SGYTPTQVGS and YTPTSVTSGN. Composition is skewed to acidic residues over residues 1091–1101 and 1118–1286; these read TEDDKDADGGE and YFEE…DSDS. An LPXTG sorting signal motif is present at residues 1310 to 1314; the sequence is LPETG. Thr1313 is modified (pentaglycyl murein peptidoglycan amidated threonine). Residues 1314 to 1347 constitute a propeptide, removed by sortase; sequence GNENSGSNNATLFGGLFAALGSLLLFGRRKKQNK.

It belongs to the serine-aspartate repeat-containing protein (SDr) family. In terms of assembly, interacts with host DSG1; this interaction increases S.aureus adherence to keratinocytes.

The protein localises to the secreted. It is found in the cell wall. Its function is as follows. Cell surface-associated calcium-binding protein which plays an important role in adhesion and pathogenesis. Mediates interactions with components of the extracellular matrix such as host DSG1 to promote bacterial adhesion to host cells. Contributes to the resistance to killing by innate immune components such as neutrophils present in blood and thus attenuates bacterial clearance. In Staphylococcus aureus (strain MW2), this protein is Serine-aspartate repeat-containing protein D (sdrD).